The chain runs to 1344 residues: Myb-binding protein 1A (1344 aa).

Positions 1 to 24 (MAEMKSPTKAEPASPAEAPQGDRR) are disordered. An N-acetylalanine modification is found at Ala-2. The segment at 2-580 (AEMKSPTKAE…WDQMMSTLKE (579 aa)) is interaction with MYB. Ser-14 carries the post-translational modification Phosphoserine. N6-acetyllysine is present on residues Lys-69 and Lys-156. Short sequence motifs (nuclear export signal) lie at residues 238-256 (SEDN…ANSV) and 261-279 (KLPD…ENKF). Disordered stretches follow at residues 696 to 752 (NEDE…DVDP) and 1150 to 1344 (PKSE…VQTP). Residues 708 to 730 (TDEKQLKHGEDADSDSEDSKNSE) show a composition bias toward basic and acidic residues. Over residues 731–746 (SDVDSEDGEESEEEDR) the composition is skewed to acidic residues. Residues 1150–1161 (PKSEKKNVKDIP) show a composition bias toward basic and acidic residues. Lys-1151 is covalently cross-linked (Glycyl lysine isopeptide (Lys-Gly) (interchain with G-Cter in SUMO2)). The segment at 1154–1344 (KKNVKDIPSD…RVARRRVQTP (191 aa)) is required for nuclear and nucleolar localization. A phosphoserine mark is found at Ser-1162 and Ser-1166. Basic residues predominate over residues 1170–1187 (TKRKKKGFLPETKKRKKL). Ser-1189 carries the post-translational modification Phosphoserine. Thr-1193 is subject to Phosphothreonine. Residues Ser-1221 and Ser-1246 each carry the phosphoserine modification. Over residues 1247 to 1256 (PAPNNPTLSP) the composition is skewed to low complexity. Residue Thr-1253 is modified to Phosphothreonine. At Ser-1255 the chain carries Phosphoserine. 2 positions are modified to phosphothreonine: Thr-1258 and Thr-1280. Phosphoserine is present on residues Ser-1283, Ser-1305, and Ser-1318. Positions 1301-1316 (VKRRSSQSALPKKRAR) are enriched in basic residues. A compositionally biased stretch (low complexity) spans 1317-1329 (LSLVSRSPSLLQS). Arg-1322 is subject to Citrulline. 3 positions are modified to phosphoserine: Ser-1323, Ser-1325, and Ser-1329. Basic residues predominate over residues 1331 to 1344 (IRKRRVARRRVQTP).

It belongs to the MYBBP1A family. In terms of assembly, binds to and represses JUN and MYB via the leucine zipper regions present in these proteins. Also binds to and represses PPARGC1A: this interaction is abrogated when PPARGC1A is phosphorylated by MAPK1/ERK. Binds to and stimulates transcription by AHR. Binds to KPNA2. Component of the B-WICH complex, at least composed of SMARCA5/SNF2H, BAZ1B/WSTF, SF3B1, DEK, MYO1C, ERCC6, MYBBP1A and DDX21. Interacts with CLOCK and CRY1. Post-translationally, citrullinated by PADI4.

It localises to the nucleus. It is found in the nucleolus. Its subcellular location is the cytoplasm. May activate or repress transcription via interactions with sequence specific DNA-binding proteins. Repression may be mediated at least in part by histone deacetylase activity (HDAC activity). Acts as a corepressor and in concert with CRY1, represses the transcription of the core circadian clock component PER2. Preferentially binds to dimethylated histone H3 'Lys-9' (H3K9me2) on the PER2 promoter. Has a role in rRNA biogenesis together with PWP1. This chain is Myb-binding protein 1A (Mybbp1a), found in Rattus norvegicus (Rat).